The sequence spans 113 residues: Nucleoid-associated protein Syncc9902_0023 (113 aa).

The protein belongs to the YbaB/EbfC family. As to quaternary structure, homodimer.

Its subcellular location is the cytoplasm. The protein localises to the nucleoid. Functionally, binds to DNA and alters its conformation. May be involved in regulation of gene expression, nucleoid organization and DNA protection. The chain is Nucleoid-associated protein Syncc9902_0023 from Synechococcus sp. (strain CC9902).